A 174-amino-acid polypeptide reads, in one-letter code: Glyoxylase I 4 (174 aa).

Residues 13-135 (SLNHVSVLCR…DGFMIEICNC (123 aa)) form the VOC domain. Catalysis depends on glutamate 131, which acts as the Proton donor/acceptor.

The protein belongs to the glyoxalase I family. As to expression, mostly expressed in roots, and, to a lower extent, in leaves, flowers, seeds and siliques.

The protein resides in the cell membrane. The protein localises to the cytoplasm. Its function is as follows. Involved in the detoxification and scavenging of methylglyoxal (MG), a cytotoxic aldehyde produced in response to primary metabolism alteration observed during biotic and abiotic stresses. Modulates cross-talk between salicylic acid (SA) and jasmonic acid (JA) signaling pathways during defense responses to pathogens such as Botrytis cinerea. In Arabidopsis thaliana (Mouse-ear cress), this protein is Glyoxylase I 4.